The sequence spans 706 residues: Elongation factor G (706 aa).

A tr-type G domain is found at 8–295; that stretch reads ELYRNFGIMA…AVIDYLPSPL (288 aa). Residues 17–24, 92–96, and 146–149 contribute to the GTP site; these read AHIDAGKT, DTPGH, and NKMD.

The protein belongs to the TRAFAC class translation factor GTPase superfamily. Classic translation factor GTPase family. EF-G/EF-2 subfamily.

The protein localises to the cytoplasm. Its function is as follows. Catalyzes the GTP-dependent ribosomal translocation step during translation elongation. During this step, the ribosome changes from the pre-translocational (PRE) to the post-translocational (POST) state as the newly formed A-site-bound peptidyl-tRNA and P-site-bound deacylated tRNA move to the P and E sites, respectively. Catalyzes the coordinated movement of the two tRNA molecules, the mRNA and conformational changes in the ribosome. This chain is Elongation factor G, found in Ruegeria sp. (strain TM1040) (Silicibacter sp.).